We begin with the raw amino-acid sequence, 342 residues long: Small GTPase LIP1 (342 aa).

The small GTPase-like stretch occupies residues 12-285 (KEQILAPLCG…FHGDPYKYNN (274 aa)). Residues 29–36 (GDSGVGKT), 90–94 (DVSGH), and 160–163 (NKAD) each bind GTP. Disordered regions lie at residues 274–313 (TSFH…TPDN) and 323–342 (SVQE…DINV). Residues 323 to 333 (SVQETTNNGSA) show a composition bias toward polar residues.

It belongs to the small GTPase superfamily.

Its subcellular location is the nucleus. It localises to the cytoplasm. In terms of biological role, functional small GTPase that acts as a negative factor controlling the light-dependent period shortening of circadian rhythms and light-induced phase resetting during the subjective night. May protect the clock from excessive or mistimed light. Suppresses red and blue light-mediated photomorphogenesis and is required for light-controlled inhibition of endoreplication and tolerance to salt stress. The entrainment of the circadian clock is independent from the other pleiotropic effects. Could be a regulator of seedling establishment. In Arabidopsis thaliana (Mouse-ear cress), this protein is Small GTPase LIP1.